The following is a 24-amino-acid chain: Ascaphin-6 (24 aa).

Expressed by the skin glands.

The protein localises to the secreted. In terms of biological role, antimicrobial peptide that shows higher potency against Gram-negative bacteria than against Gram-positive bacteria. Has a very week hemolytic activity. The polypeptide is Ascaphin-6 (Ascaphus truei (Coastal tailed frog)).